The following is a 571-amino-acid chain: E3 ubiquitin-protein ligase ipaH3 (571 aa).

The segment at 1-260 (MSIMLPINNN…SQQTAQPDYH (260 aa)) is interaction with target proteins. LRR repeat units follow at residues 58–81 (INQFSELQLNRLNLSSLPDNLPPQ), 83–99 (TVLEITQNALISLPELP), 100–119 (ASLEYLDACDNRLSTLPELP), 120–144 (ASLKHLDVDNNQLTMLPELPALLEY), 146–159 (NADNNQLTMLPELP), 160–184 (TSLEVLSVRNNQLTFLPELPESLEA), 186–202 (DVSTNLLESLPAVPVRN), 205–229 (SEETEIFFRCRENRITHIPENILSL), and 232–260 (TCTIILEDNPLSSRIRESLSQQTAQPDYH). The tract at residues 269-278 (SDGQQNTLHR) is linker. The NEL domain maps to 279–571 (PLADAVTAWF…SENGSQLHHS (293 aa)). An E3 ubiquitin-protein ligase catalytic domain region spans residues 279 to 571 (PLADAVTAWF…SENGSQLHHS (293 aa)). The active-site Glycyl thioester intermediate is C363.

The protein belongs to the LRR-containing bacterial E3 ligase family. Ubiquitinated in the presence of host E1 ubiquitin-activating enzyme, E2 ubiquitin-conjugating enzyme UBE2D3 and ubiquitin.

It is found in the secreted. The protein resides in the host cytoplasm. It catalyses the reaction S-ubiquitinyl-[E2 ubiquitin-conjugating enzyme]-L-cysteine + [acceptor protein]-L-lysine = [E2 ubiquitin-conjugating enzyme]-L-cysteine + N(6)-ubiquitinyl-[acceptor protein]-L-lysine.. Its function is as follows. Effector proteins function to alter host cell physiology and promote bacterial survival in host tissues. This protein is an E3 ubiquitin ligase that interferes with host's ubiquitination pathway. Synthesizes a 'Lys-48'-linked ubiquitin chain, which requires non-covalent binding between ubiquitin and the host ubiquitin-conjugating enzyme UBE2D1. This is E3 ubiquitin-protein ligase ipaH3 (ipaH3) from Shigella flexneri.